We begin with the raw amino-acid sequence, 847 residues long: Bifunctional protein argC, mitochondrial (847 aa).

The tract at residues 100-331 (QIVLVKIGGG…PPSTSITITS (232 aa)) is acetylglutamate kinase. Residues 352–508 (GEVMHSHESP…CLSQSSTYLS (157 aa)) enclose the N-acetyltransferase domain. Positions 531-846 (FRVGLIGARG…LDELASIKNE (316 aa)) are N-acetyl-gamma-glutamyl-phosphate reductase. The active site involves cysteine 665.

In the N-terminal section; belongs to the acetylglutamate kinase family. This sequence in the C-terminal section; belongs to the NAGSA dehydrogenase family.

Its subcellular location is the mitochondrion. It carries out the reaction N-acetyl-L-glutamate 5-semialdehyde + phosphate + NADP(+) = N-acetyl-L-glutamyl 5-phosphate + NADPH + H(+). The enzyme catalyses N-acetyl-L-glutamate + ATP = N-acetyl-L-glutamyl 5-phosphate + ADP. Its pathway is amino-acid biosynthesis; L-arginine biosynthesis; N(2)-acetyl-L-ornithine from L-glutamate: step 2/4. It participates in amino-acid biosynthesis; L-arginine biosynthesis; N(2)-acetyl-L-ornithine from L-glutamate: step 3/4. The sequence is that of Bifunctional protein argC, mitochondrial (argC) from Dictyostelium discoideum (Social amoeba).